We begin with the raw amino-acid sequence, 298 residues long: Probable porphobilinogen deaminase (298 aa).

An S-(dipyrrolylmethanemethyl)cysteine modification is found at C241.

This sequence belongs to the HMBS family. The cofactor is dipyrromethane.

The enzyme catalyses 4 porphobilinogen + H2O = hydroxymethylbilane + 4 NH4(+). Its pathway is porphyrin-containing compound metabolism; protoporphyrin-IX biosynthesis; coproporphyrinogen-III from 5-aminolevulinate: step 2/4. Functionally, tetrapolymerization of the monopyrrole PBG into the hydroxymethylbilane pre-uroporphyrinogen in several discrete steps. This chain is Probable porphobilinogen deaminase, found in Methanopyrus kandleri (strain AV19 / DSM 6324 / JCM 9639 / NBRC 100938).